A 290-amino-acid chain; its full sequence is 33 kDa chaperonin (290 aa).

Disulfide bonds link C231–C233 and C264–C267.

This sequence belongs to the HSP33 family. Post-translationally, under oxidizing conditions two disulfide bonds are formed involving the reactive cysteines. Under reducing conditions zinc is bound to the reactive cysteines and the protein is inactive.

The protein resides in the cytoplasm. Redox regulated molecular chaperone. Protects both thermally unfolding and oxidatively damaged proteins from irreversible aggregation. Plays an important role in the bacterial defense system toward oxidative stress. In Photorhabdus laumondii subsp. laumondii (strain DSM 15139 / CIP 105565 / TT01) (Photorhabdus luminescens subsp. laumondii), this protein is 33 kDa chaperonin.